We begin with the raw amino-acid sequence, 141 residues long: Large ribosomal subunit protein uL11 (141 aa).

It belongs to the universal ribosomal protein uL11 family. Part of the ribosomal stalk of the 50S ribosomal subunit. Interacts with L10 and the large rRNA to form the base of the stalk. L10 forms an elongated spine to which L12 dimers bind in a sequential fashion forming a multimeric L10(L12)X complex. Post-translationally, one or more lysine residues are methylated.

Functionally, forms part of the ribosomal stalk which helps the ribosome interact with GTP-bound translation factors. This chain is Large ribosomal subunit protein uL11, found in Tropheryma whipplei (strain TW08/27) (Whipple's bacillus).